The following is a 220-amino-acid chain: 3-dehydroquinate dehydratase (220 aa).

3-dehydroquinate is bound by residues 29–31 (EFR) and arginine 56. Residue histidine 116 is the Proton donor/acceptor of the active site. Lysine 142 serves as the catalytic Schiff-base intermediate with substrate. Positions 180, 200, and 204 each coordinate 3-dehydroquinate.

It belongs to the type-I 3-dehydroquinase family. In terms of assembly, homodimer.

It carries out the reaction 3-dehydroquinate = 3-dehydroshikimate + H2O. Its pathway is metabolic intermediate biosynthesis; chorismate biosynthesis; chorismate from D-erythrose 4-phosphate and phosphoenolpyruvate: step 3/7. Functionally, involved in the third step of the chorismate pathway, which leads to the biosynthesis of aromatic amino acids. Catalyzes the cis-dehydration of 3-dehydroquinate (DHQ) and introduces the first double bond of the aromatic ring to yield 3-dehydroshikimate. The chain is 3-dehydroquinate dehydratase from Methanocaldococcus jannaschii (strain ATCC 43067 / DSM 2661 / JAL-1 / JCM 10045 / NBRC 100440) (Methanococcus jannaschii).